A 156-amino-acid polypeptide reads, in one-letter code: Small ribosomal subunit protein uS7 (156 aa).

It belongs to the universal ribosomal protein uS7 family. Part of the 30S ribosomal subunit. Contacts proteins S9 and S11.

In terms of biological role, one of the primary rRNA binding proteins, it binds directly to 16S rRNA where it nucleates assembly of the head domain of the 30S subunit. Is located at the subunit interface close to the decoding center, probably blocks exit of the E-site tRNA. In Staphylococcus aureus (strain USA300), this protein is Small ribosomal subunit protein uS7.